Reading from the N-terminus, the 696-residue chain is Protein OS-9 homolog (696 aa).

Residues 1–15 (MLVVAFASLLGAARA) form the signal peptide. N-linked (GlcNAc...) asparagine glycans are attached at residues Asn-35, Asn-46, and Asn-68. The 119-residue stretch at 106 to 224 (NQCLVSQNGF…QVIVPDLCQL (119 aa)) folds into the MRH domain. Cys-108 and Cys-121 are joined by a disulfide. 6 residues coordinate a mannooligosaccharide derivative: Trp-116, Gln-128, Asp-178, Arg-184, Glu-206, and Tyr-212. Disulfide bonds link Cys-177–Cys-210 and Cys-192–Cys-222. Asn-276, Asn-290, and Asn-372 each carry an N-linked (GlcNAc...) asparagine glycan. 2 disordered regions span residues 450–600 (IEAS…DNSD) and 667–696 (TLGN…DDEL). Residues 458–467 (TKASESTPVS) show a composition bias toward polar residues. A compositionally biased stretch (basic and acidic residues) spans 482-498 (RSRDKEEYFKENEKQGE). Polar residues-rich tracts occupy residues 499–518 (ENNA…GTIS), 528–553 (NQKQ…SAND), and 585–597 (NIDN…TLND). N-linked (GlcNAc...) asparagine glycosylation is present at Asn-588. Basic and acidic residues predominate over residues 685-696 (ESDRNGVIDDEL).

Belongs to the OS-9 family. In terms of assembly, interacts with missfolded ER lumenal proteins.

It localises to the endoplasmic reticulum membrane. Functionally, lectin involved in the quality control of the secretory pathway. As a member of the endoplasmic reticulum-associated degradation lumenal (ERAD-L) surveillance system, targets misfolded endoplasmic reticulum lumenal glycoproteins for degradation. In Candida glabrata (strain ATCC 2001 / BCRC 20586 / JCM 3761 / NBRC 0622 / NRRL Y-65 / CBS 138) (Yeast), this protein is Protein OS-9 homolog (YOS9).